Consider the following 886-residue polypeptide: MWWPYLVLALLSGLEASGFPRSPLRLLGKRSLPEGVVDGVEVYSTKISCKVTSRFAHNVVTTRAVNRADQAKEVSFDVELPKTAFITNFTLTIDGVTYPGNIKEKEVAQKQYDKAVSQGKTAGLVKASGRKLEKFTVSVNVAAGSKVTFELTYEELLKRHKGKYEMYLKVQPKQLVRHFEIDAHIFEPQGISMLDAEASFITNDLLGSALTKSFSGKKGHVSFKPSLDQQRSCPTCTDSLLNGDFTIVYDVNRESPGNVQVVNGYFVHFFAPQGLPVVPKNIVFVIDISGSMAGRKIQQTRVALLKILDDMKQDDYLNFILFSTGVTTWKDSLVQATPANLEEARTFVRSISDQGMTNINDGLLRGIRMLTDAREQHTVPERSTSIIIMLTDGDANTGESRPEKIQENVRKAIEGRFPLYNLGFGNNLNYNFLETMALENHGVARRIYEDSDANLQLQGFYEEVANPLLTNVEVEYPENAILDLTKNSYPHFYDGSETAVAGRLADSDMNNFKADVKGHGALNDLTFTEEVDMKEMDAALKEQGYIFGNYIERLWAYLTIEQLLEKRKNAHGEEKENLTAQALELSLKYHFVTPLTPMVVTKPEDNEDQTSIADKPGEDAPYAATSTAYLTSHQSPPTPYYYVDGDPHFIIQVPGKNDTICFNIDEKPGTVLRLIQDPVTGITVTGQIIGDKGSSPYSRTGKTYFGKLGITHAWMDFRIEVTTEKIILGTEDELSTFSWLDTVTITQTGLFVAINRKKNMVVSFGDGVNFVIVLHQVWKKHPLHQDFLGFYVVDSHRMSARTHGLLGQFFRPFDFEVSDVRPGSDPAKPDATMVVKNHQLTVTRGSQRDYRKDASVGTKVTCWFVHNNGEGLIDGVHTDYIVPSLF.

The signal sequence occupies residues 1–18 (MWWPYLVLALLSGLEASG). Positions 19–30 (FPRSPLRLLGKR) are excised as a propeptide. The 130-residue stretch at 26 to 155 (LLGKRSLPEG…KVTFELTYEE (130 aa)) folds into the VIT domain. Asn88 carries an N-linked (GlcNAc...) asparagine glycan. In terms of domain architecture, VWFA spans 279 to 439 (PKNIVFVIDI…YNFLETMALE (161 aa)). N-linked (GlcNAc...) asparagine glycosylation is present at Asn577. Asp646 bears the Aspartate 1-(chondroitin 4-sulfate)-ester mark. Residues 647-886 (PHFIIQVPGK…HTDYIVPSLF (240 aa)) constitute a propeptide that is removed on maturation.

It belongs to the ITIH family. In terms of assembly, I-alpha-I plasma protease inhibitors are assembled from one or two heavy chains (HC) and one light chain, bikunin. Pre-alpha-inhibitor (P-alpha-I) is composed of ITIH3/HC3 and bikunin. Heavy chains are linked to bikunin via chondroitin 4-sulfate esterified to the alpha-carboxyl of the C-terminal aspartate after propeptide cleavage.

The protein localises to the secreted. Its function is as follows. May act as a carrier of hyaluronan in serum or as a binding protein between hyaluronan and other matrix protein, including those on cell surfaces in tissues to regulate the localization, synthesis and degradation of hyaluronan which are essential to cells undergoing biological processes. The chain is Inter-alpha-trypsin inhibitor heavy chain H3 (ITIH3) from Mesocricetus auratus (Golden hamster).